The primary structure comprises 133 residues: Arginine decarboxylase proenzyme (133 aa).

S81 (schiff-base intermediate with substrate; via pyruvic acid) is an active-site residue. A Pyruvic acid (Ser); by autocatalysis modification is found at S81. H86 acts as the Proton acceptor; for processing activity in catalysis. C101 (proton donor; for catalytic activity) is an active-site residue.

The protein belongs to the prokaryotic AdoMetDC family. Type 1 subfamily. As to quaternary structure, heterooctamer of four alpha and four beta chains arranged as a tetramer of alpha/beta heterodimers. It depends on pyruvate as a cofactor. Is synthesized initially as an inactive proenzyme. Formation of the active enzyme involves a self-maturation process in which the active site pyruvoyl group is generated from an internal serine residue via an autocatalytic post-translational modification. Two non-identical subunits are generated from the proenzyme in this reaction, and the pyruvate is formed at the N-terminus of the alpha chain, which is derived from the carboxyl end of the proenzyme. The post-translation cleavage follows an unusual pathway, termed non-hydrolytic serinolysis, in which the side chain hydroxyl group of the serine supplies its oxygen atom to form the C-terminus of the beta chain, while the remainder of the serine residue undergoes an oxidative deamination to produce ammonia and the pyruvoyl group blocking the N-terminus of the alpha chain.

The catalysed reaction is L-arginine + H(+) = agmatine + CO2. The protein operates within amine and polyamine biosynthesis; agmatine biosynthesis; agmatine from L-arginine: step 1/1. Functionally, specifically catalyzes the decarboxylation of L-arginine to agmatine. Has no S-adenosylmethionine decarboxylase (AdoMetDC) activity. This Pyrobaculum arsenaticum (strain DSM 13514 / JCM 11321 / PZ6) protein is Arginine decarboxylase proenzyme.